The chain runs to 370 residues: Anhydro-N-acetylmuramic acid kinase (370 aa).

13-20 provides a ligand contact to ATP; it reads GTSMDGID.

Belongs to the anhydro-N-acetylmuramic acid kinase family.

It catalyses the reaction 1,6-anhydro-N-acetyl-beta-muramate + ATP + H2O = N-acetyl-D-muramate 6-phosphate + ADP + H(+). It participates in amino-sugar metabolism; 1,6-anhydro-N-acetylmuramate degradation. It functions in the pathway cell wall biogenesis; peptidoglycan recycling. Catalyzes the specific phosphorylation of 1,6-anhydro-N-acetylmuramic acid (anhMurNAc) with the simultaneous cleavage of the 1,6-anhydro ring, generating MurNAc-6-P. Is required for the utilization of anhMurNAc either imported from the medium or derived from its own cell wall murein, and thus plays a role in cell wall recycling. This is Anhydro-N-acetylmuramic acid kinase from Rhizobium etli (strain ATCC 51251 / DSM 11541 / JCM 21823 / NBRC 15573 / CFN 42).